A 143-amino-acid chain; its full sequence is D-aminoacyl-tRNA deacylase (143 aa).

Residues 135–136 carry the Gly-cisPro motif, important for rejection of L-amino acids motif; it reads GP.

Belongs to the DTD family. Homodimer.

It localises to the cytoplasm. It catalyses the reaction glycyl-tRNA(Ala) + H2O = tRNA(Ala) + glycine + H(+). The catalysed reaction is a D-aminoacyl-tRNA + H2O = a tRNA + a D-alpha-amino acid + H(+). An aminoacyl-tRNA editing enzyme that deacylates mischarged D-aminoacyl-tRNAs. Also deacylates mischarged glycyl-tRNA(Ala), protecting cells against glycine mischarging by AlaRS. Acts via tRNA-based rather than protein-based catalysis; rejects L-amino acids rather than detecting D-amino acids in the active site. By recycling D-aminoacyl-tRNA to D-amino acids and free tRNA molecules, this enzyme counteracts the toxicity associated with the formation of D-aminoacyl-tRNA entities in vivo and helps enforce protein L-homochirality. This is D-aminoacyl-tRNA deacylase from Mycolicibacterium gilvum (strain PYR-GCK) (Mycobacterium gilvum (strain PYR-GCK)).